A 556-amino-acid polypeptide reads, in one-letter code: M-phase inducer phosphatase (556 aa).

Disordered stretches follow at residues 165–186 and 257–297; these read STDGLVPDSPTVLPKDGKQERR and TSGL…RPRK. The span at 287 to 297 shows a compositional bias: basic residues; it reads KSAHPNMRPRK. A Rhodanese domain is found at 371-474; the sequence is MFDNIMIIDC…FFAEHRSLCY (104 aa). The active site involves Cys-421. Positions 505-516 are enriched in polar residues; it reads RAQTFAFGQQSP. Residues 505-556 form a disordered region; that stretch reads RAQTFAFGQQSPEMEDSPTGRCRNNPGDRKLLASPFNDSPGSRFPGRRMLSY.

Belongs to the MPI phosphatase family.

It catalyses the reaction O-phospho-L-tyrosyl-[protein] + H2O = L-tyrosyl-[protein] + phosphate. Its function is as follows. This protein functions as a dosage-dependent inducer in mitotic control. It is a tyrosine protein phosphatase required for progression of the cell cycle. It may directly dephosphorylate p34(cdc2) and activate the p34(cdc2) kinase activity. The sequence is that of M-phase inducer phosphatase (nimT) from Emericella nidulans (strain FGSC A4 / ATCC 38163 / CBS 112.46 / NRRL 194 / M139) (Aspergillus nidulans).